Reading from the N-terminus, the 311-residue chain is Malate dehydrogenase (311 aa).

Residues 7–13 and aspartate 34 each bind NAD(+); that span reads GAAGGIG. The substrate site is built by arginine 81 and arginine 87. NAD(+)-binding positions include asparagine 94 and 117–119; that span reads ITN. Substrate-binding residues include asparagine 119 and arginine 153. Residue histidine 177 is the Proton acceptor of the active site. Position 227 (methionine 227) interacts with NAD(+).

It belongs to the LDH/MDH superfamily. MDH type 1 family. As to quaternary structure, homodimer.

The enzyme catalyses (S)-malate + NAD(+) = oxaloacetate + NADH + H(+). In terms of biological role, catalyzes the reversible oxidation of malate to oxaloacetate. In Shewanella halifaxensis (strain HAW-EB4), this protein is Malate dehydrogenase.